We begin with the raw amino-acid sequence, 215 residues long: Pyrrolidone-carboxylate peptidase (215 aa).

Residues glutamate 80, cysteine 143, and histidine 167 contribute to the active site.

Belongs to the peptidase C15 family. As to quaternary structure, homotetramer.

It localises to the cytoplasm. The enzyme catalyses Release of an N-terminal pyroglutamyl group from a polypeptide, the second amino acid generally not being Pro.. Functionally, removes 5-oxoproline from various penultimate amino acid residues except L-proline. The chain is Pyrrolidone-carboxylate peptidase from Bacillus cytotoxicus (strain DSM 22905 / CIP 110041 / 391-98 / NVH 391-98).